The chain runs to 393 residues: NAD(P)H-quinone oxidoreductase subunit H, chloroplastic (393 aa).

This sequence belongs to the complex I 49 kDa subunit family. As to quaternary structure, NDH is composed of at least 16 different subunits, 5 of which are encoded in the nucleus.

It localises to the plastid. The protein resides in the chloroplast thylakoid membrane. It catalyses the reaction a plastoquinone + NADH + (n+1) H(+)(in) = a plastoquinol + NAD(+) + n H(+)(out). The enzyme catalyses a plastoquinone + NADPH + (n+1) H(+)(in) = a plastoquinol + NADP(+) + n H(+)(out). Functionally, NDH shuttles electrons from NAD(P)H:plastoquinone, via FMN and iron-sulfur (Fe-S) centers, to quinones in the photosynthetic chain and possibly in a chloroplast respiratory chain. The immediate electron acceptor for the enzyme in this species is believed to be plastoquinone. Couples the redox reaction to proton translocation, and thus conserves the redox energy in a proton gradient. In Barbarea verna (Land cress), this protein is NAD(P)H-quinone oxidoreductase subunit H, chloroplastic.